The sequence spans 150 residues: Dihydroneopterin triphosphate diphosphatase (150 aa).

The Nudix hydrolase domain maps to 5–146; it reads VYKRPVSILV…SNRQAIEQFV (142 aa). Substrate-binding residues include lysine 7, arginine 29, and threonine 40. The short motif at 41 to 62 is the Nudix box element; that stretch reads GSVEEGETAPQAAMREVKEEVT. Positions 56 and 60 each coordinate Mg(2+). 81–84 lines the substrate pocket; that stretch reads FEIF. Residue glutamate 117 coordinates Mg(2+). Serine 135 is a binding site for substrate.

It belongs to the Nudix hydrolase family. The cofactor is Mg(2+).

It carries out the reaction 7,8-dihydroneopterin 3'-triphosphate + H2O = 7,8-dihydroneopterin 3'-phosphate + diphosphate + H(+). Its function is as follows. Catalyzes the hydrolysis of dihydroneopterin triphosphate to dihydroneopterin monophosphate and pyrophosphate. Required for efficient folate biosynthesis. Can also hydrolyze nucleoside triphosphates with a preference for dATP. This is Dihydroneopterin triphosphate diphosphatase (nudB) from Escherichia coli O157:H7.